Here is a 418-residue protein sequence, read N- to C-terminus: Tryptophan synthase beta chain (418 aa).

An N6-(pyridoxal phosphate)lysine modification is found at lysine 109.

The protein belongs to the TrpB family. In terms of assembly, tetramer of two alpha and two beta chains. It depends on pyridoxal 5'-phosphate as a cofactor.

It carries out the reaction (1S,2R)-1-C-(indol-3-yl)glycerol 3-phosphate + L-serine = D-glyceraldehyde 3-phosphate + L-tryptophan + H2O. Its pathway is amino-acid biosynthesis; L-tryptophan biosynthesis; L-tryptophan from chorismate: step 5/5. Its function is as follows. The beta subunit is responsible for the synthesis of L-tryptophan from indole and L-serine. The sequence is that of Tryptophan synthase beta chain from Thermus thermophilus (strain ATCC 27634 / DSM 579 / HB8).